A 182-amino-acid chain; its full sequence is Bifunctional protein PyrR (182 aa).

Positions 99 to 111 (VVLVDDVLFTGRT) match the PRPP-binding motif.

The protein belongs to the purine/pyrimidine phosphoribosyltransferase family. PyrR subfamily.

It carries out the reaction UMP + diphosphate = 5-phospho-alpha-D-ribose 1-diphosphate + uracil. Regulates the transcription of the pyrimidine nucleotide (pyr) operon in response to exogenous pyrimidines. Functionally, also displays a weak uracil phosphoribosyltransferase activity which is not physiologically significant. This chain is Bifunctional protein PyrR, found in Chloroflexus aurantiacus (strain ATCC 29366 / DSM 635 / J-10-fl).